Reading from the N-terminus, the 126-residue chain is Fluoride-specific ion channel FluC (126 aa).

The next 4 helical transmembrane spans lie at 5–25 (IAVICLAACVGALMRWGFALW), 34–54 (WGTLAVNLIGGYCIGIALAVF), 67–87 (LVITGFLGTLTTFSSFSGEVV), and 95–115 (FGLAFGTIALHLGGSLALTWA). Na(+) is bound by residues glycine 74 and threonine 77.

The protein belongs to the fluoride channel Fluc/FEX (TC 1.A.43) family.

It is found in the cell inner membrane. It catalyses the reaction fluoride(in) = fluoride(out). Na(+) is not transported, but it plays an essential structural role and its presence is essential for fluoride channel function. Its function is as follows. Fluoride-specific ion channel. Important for reducing fluoride concentration in the cell, thus reducing its toxicity. The sequence is that of Fluoride-specific ion channel FluC from Paracidovorax citrulli (strain AAC00-1) (Acidovorax citrulli).